Consider the following 361-residue polypeptide: 3-dehydroquinate synthase (361 aa).

NAD(+) is bound by residues 107-111 (GVIGD), 131-132 (TS), K144, and K153. Positions 186, 251, and 268 each coordinate Zn(2+).

This sequence belongs to the sugar phosphate cyclases superfamily. Dehydroquinate synthase family. NAD(+) is required as a cofactor. The cofactor is Co(2+). Requires Zn(2+) as cofactor.

It is found in the cytoplasm. It catalyses the reaction 7-phospho-2-dehydro-3-deoxy-D-arabino-heptonate = 3-dehydroquinate + phosphate. Its pathway is metabolic intermediate biosynthesis; chorismate biosynthesis; chorismate from D-erythrose 4-phosphate and phosphoenolpyruvate: step 2/7. Functionally, catalyzes the conversion of 3-deoxy-D-arabino-heptulosonate 7-phosphate (DAHP) to dehydroquinate (DHQ). This is 3-dehydroquinate synthase from Synechocystis sp. (strain ATCC 27184 / PCC 6803 / Kazusa).